Consider the following 564-residue polypeptide: Arginine--tRNA ligase (564 aa).

A 'HIGH' region motif is present at residues 122–132 (PNIAKPFSIGH).

It belongs to the class-I aminoacyl-tRNA synthetase family. In terms of assembly, monomer.

It is found in the cytoplasm. It catalyses the reaction tRNA(Arg) + L-arginine + ATP = L-arginyl-tRNA(Arg) + AMP + diphosphate. This chain is Arginine--tRNA ligase, found in Lactococcus lactis subsp. lactis (strain IL1403) (Streptococcus lactis).